A 78-amino-acid chain; its full sequence is U23-theraphotoxin-Cg1a 1 (78 aa).

The N-terminal stretch at 1 to 21 (MKTSVLVTVLGLAVISVLCSA) is a signal peptide. The propeptide occupies 22–49 (SQDEEQDMYDELLSAVFEVNDELQSEAR). 3 disulfide bridges follow: Cys50–Cys64, Cys57–Cys69, and Cys63–Cys75.

This sequence belongs to the neurotoxin 10 (Hwtx-1) family. 64 (Jztx-20) subfamily. Expressed by the venom gland.

It is found in the secreted. In terms of biological role, probable ion channel inhibitor. In Chilobrachys guangxiensis (Chinese earth tiger tarantula), this protein is U23-theraphotoxin-Cg1a 1.